Consider the following 173-residue polypeptide: Photosystem I assembly protein Ycf3 (173 aa).

TPR repeat units follow at residues 35 to 68 (AYLY…EDNQ), 72 to 105 (GETL…NPKQ), and 120 to 153 (GRMA…YPGG).

The protein belongs to the Ycf3 family.

The protein localises to the cellular thylakoid membrane. Essential for the assembly of the photosystem I (PSI) complex. May act as a chaperone-like factor to guide the assembly of the PSI subunits. This Prochlorococcus marinus (strain NATL1A) protein is Photosystem I assembly protein Ycf3.